Reading from the N-terminus, the 252-residue chain is NAD-dependent protein deacetylase (252 aa).

The Deacetylase sirtuin-type domain occupies 1–248; sequence MYLVEEAKKV…PEVISHIQSL (248 aa). Residues A26, T30, F37, R38, Q102, V104, D105, and H120 each contribute to the NAD(+) site. Nicotinamide is bound at residue F37. Residues V104 and D105 each contribute to the nicotinamide site. H120 acts as the Proton acceptor in catalysis. 4 residues coordinate Zn(2+): C128, C131, C153, and C155. Positions 191, 192, 216, and 234 each coordinate NAD(+).

The protein belongs to the sirtuin family. Class U subfamily. It depends on Zn(2+) as a cofactor.

It is found in the cytoplasm. The catalysed reaction is N(6)-acetyl-L-lysyl-[protein] + NAD(+) + H2O = 2''-O-acetyl-ADP-D-ribose + nicotinamide + L-lysyl-[protein]. Functionally, NAD-dependent protein deacetylase which modulates the activities of several enzymes which are inactive in their acetylated form. Deacetylates the N-terminal lysine residue of Alba, the major archaeal chromatin protein and that, in turn, increases Alba's DNA binding affinity, thereby repressing transcription. The protein is NAD-dependent protein deacetylase of Sulfolobus acidocaldarius (strain ATCC 33909 / DSM 639 / JCM 8929 / NBRC 15157 / NCIMB 11770).